Consider the following 520-residue polypeptide: Cyclic AMP-responsive element-binding protein 3-like protein 2 (520 aa).

Topologically, residues 1–379 (MEVLESGEQG…KLAGTQTGTC (379 aa)) are cytoplasmic. Ser93 carries the post-translational modification Phosphoserine. Lys178 is covalently cross-linked (Glycyl lysine isopeptide (Lys-Gly) (interchain with G-Cter in SUMO2)). A Phosphoserine modification is found at Ser191. The disordered stretch occupies residues 195-264 (APVDHLHLPP…PHKLQGSGPL (70 aa)). Low complexity-rich tracts occupy residues 208-220 (SSHG…SLSP) and 234-255 (SPSR…LTAP). Residues 294–357 (ALKKIRRKIK…RTLLQQLQKL (64 aa)) enclose the bZIP domain. The interval 296–325 (KKIRRKIKNKISAQESRRKKKEYMDSLEKK) is basic motif. Residues 336–357 (LRKKVEVLENTNRTLLQQLQKL) form a leucine-zipper region. The chain crosses the membrane as a helical; Signal-anchor for type II membrane protein span at residues 380–400 (LMVVVLCFAVAFGSFFQGYGP). Topologically, residues 401 to 520 (YPSATKMALP…ELDRRVNTTF (120 aa)) are lumenal. The short motif at 427–430 (RNLL) is the S1P recognition element. N-linked (GlcNAc...) asparagine glycans are attached at residues Asn480, Asn504, and Asn517.

It belongs to the bZIP family. ATF subfamily. As to quaternary structure, binds DNA as a dimer. Post-translationally, upon ER stress, translocated to the Golgi apparatus, where it is processed by regulated intramembrane proteolysis (RIP) to release the cytosol-facing N-terminal transcription factor domain. The cleavage is performed sequentially by site-1 and site-2 proteases (S1P/MBTPS1 and S2P/MBTPS2). In terms of processing, N-glycosylated. Ubiquitinated by HRD1/SYVN1; undergoes 'Lys-48'-linked ubiquitination, followed by rapid proteasomal degradation under normal conditions. Upon ER stress, SYVN1 E3 ubiquitin-protein ligase dissociates from its substrate, ubiquitination does not occur and CREB3L2 is stabilized. In terms of tissue distribution, widely expressed with highest levels in placenta, lung, spleen and intestine, and lowest levels in heart, brain, skeletal muscle, thymus, colon and leukocytes. In fetal tissues, the weakest expression is detected in brain and heart.

Its subcellular location is the endoplasmic reticulum membrane. The protein resides in the nucleus. Functionally, transcription factor involved in unfolded protein response (UPR). In the absence of endoplasmic reticulum (ER) stress, inserted into ER membranes, with N-terminal DNA-binding and transcription activation domains oriented toward the cytosolic face of the membrane. In response to ER stress, transported to the Golgi, where it is cleaved in a site-specific manner by resident proteases S1P/MBTPS1 and S2P/MBTPS2. The released N-terminal cytosolic domain is translocated to the nucleus to effect transcription of specific target genes. Plays a critical role in chondrogenesis by activating the transcription of SEC23A, which promotes the transport and secretion of cartilage matrix proteins, and possibly that of ER biogenesis-related genes. In a neuroblastoma cell line, protects cells from ER stress-induced death. In vitro activates transcription of target genes via direct binding to the CRE site. The polypeptide is Cyclic AMP-responsive element-binding protein 3-like protein 2 (CREB3L2) (Homo sapiens (Human)).